A 335-amino-acid polypeptide reads, in one-letter code: E3 ubiquitin ligase rnf-121 (335 aa).

Residues 1–47 (MGQHGAIRLQNEVQEGMPPPHELTEEEQWAEEHRKMHEKHKGHEAMH) lie on the Cytoplasmic side of the membrane. The chain crosses the membrane as a helical span at residues 48–68 (MEMMVIFMISVIVGQIFLVTW). The Lumenal segment spans residues 69–72 (KRKH). Residues 73–93 (FKSYQMCTLIGMLTIPVYVCF) form a helical membrane-spanning segment. Residues 94 to 99 (NRSWYR) are Cytoplasmic-facing. Residues 100-120 (FLATWLVFCIFSAFIWLKASA) traverse the membrane as a helical segment. The Lumenal portion of the chain corresponds to 121 to 143 (QHISGGTPRFVYKWFLFLHKLSY). The helical transmembrane segment at 144-164 (VLGVVGYLIMMGALLGFHVLF) threads the bilayer. Topologically, residues 165-168 (GVSQ) are cytoplasmic. Residues 169-189 (PTLMDAGILFMFYGVYYGVLG) traverse the membrane as a helical segment. Topologically, residues 190–335 (RDFAHICTAR…QGLTTWMGLE (146 aa)) are lumenal. The RING-type; atypical zinc finger occupies 222–284 (CAVCGGRLDD…GKLQTCPYCK (63 aa)).

It belongs to the RNF121 family. In terms of tissue distribution, expressed in body wall muscles, the hypodermis, seam cells, vulval cells, spermathecal cells, uterine cells and the distal tip cell (at protein level).

Its subcellular location is the endoplasmic reticulum membrane. It localises to the golgi apparatus membrane. It carries out the reaction S-ubiquitinyl-[E2 ubiquitin-conjugating enzyme]-L-cysteine + [acceptor protein]-L-lysine = [E2 ubiquitin-conjugating enzyme]-L-cysteine + N(6)-ubiquitinyl-[acceptor protein]-L-lysine.. Its pathway is protein modification; protein ubiquitination. E3 ubiquitin ligase which accepts ubiquitin and transfers it to substrates such as the beta-integrin subunit pat-3, promoting their degradation by the endoplasmic reticulum-associated degradation (ERAD) pathway which is a pathway involved in ubiquitin-dependent degradation of misfolded endoplasmic reticulum proteins. Negatively regulates the unfolded protein response to reduce endoplasmic reticulum stress. Required for the cessation of distal tip cell migration at the end of larval morphogenesis. Plays a role in germline and gonad development. In Caenorhabditis elegans, this protein is E3 ubiquitin ligase rnf-121.